We begin with the raw amino-acid sequence, 84 residues long: Large ribosomal subunit protein bL28 (84 aa).

This sequence belongs to the bacterial ribosomal protein bL28 family.

This is Large ribosomal subunit protein bL28 from Clostridium perfringens (strain 13 / Type A).